The following is a 435-amino-acid chain: MVGFGANRRAGRLPSFVLVVLLVVIVVLAFNYWSISSRHVLLQEEVAELQGQVQRTEVARGRLEKRNSDLLLLVDTHKKQIDQKEADYGRLSSRLQAKEGLGKRCEDDKVKLQNNISYQMADIHHLKEQLAELRQEFLRQEDQLQDYRKNNTYLVKRLEYESFQCGQQIKELRAQHEENIKKLADQFLQEQKETHKIQSNDGKELGRNDHGAPKNIPNVPENDANKNEDPSSNHLPHGKEQLKRVGDAGMPGVEENDLAKVDELPAALKKPPVLASQHESHQTISHLPTGQPLSPNMAPGSHLNQNENPSTSKQNPSNPLQHIIPGPNLDREPRIQTDTLKQATRDRANDFHKLKQSRFFDENESPVDPQHGSKLADYNGDDGNVGEYEADKQAELAYNEEEDGDGGEEDVQDDEERELQMDPADYGKQRFSDVL.

Residue Met1 is modified to N-acetylmethionine. Residues 1–14 (MVGFGANRRAGRLP) lie on the Cytoplasmic side of the membrane. A helical; Signal-anchor for type II membrane protein transmembrane segment spans residues 15–35 (SFVLVVLLVVIVVLAFNYWSI). Residues 35–194 (ISSRHVLLQE…DQFLQEQKET (160 aa)) are a coiled coil. At 36–435 (SSRHVLLQEE…YGKQRFSDVL (400 aa)) the chain is on the lumenal side. Basic and acidic residues-rich tracts occupy residues 191-212 (QKETHKIQSNDGKELGRNDHGA) and 223-239 (DANKNEDPSSNHLPHGK). Disordered stretches follow at residues 191–239 (QKET…PHGK) and 271–435 (PPVL…SDVL). Ser232 is subject to Phosphoserine. Composition is skewed to polar residues over residues 282 to 294 (QTISHLPTGQPLS) and 302 to 320 (HLNQNENPSTSKQNPSNPL). Basic and acidic residues predominate over residues 343–361 (ATRDRANDFHKLKQSRFFD). Ser365 is modified (phosphoserine). Positions 398 to 417 (YNEEEDGDGGEEDVQDDEER) are enriched in acidic residues. Residues 425-435 (DYGKQRFSDVL) show a composition bias toward basic and acidic residues.

Belongs to the GOLM family.

The protein localises to the membrane. This is Protein GOLM2 from Mus musculus (Mouse).